The chain runs to 101 residues: Small ribosomal subunit protein uS14 (101 aa).

The protein belongs to the universal ribosomal protein uS14 family. As to quaternary structure, part of the 30S ribosomal subunit. Contacts proteins S3 and S10.

Functionally, binds 16S rRNA, required for the assembly of 30S particles and may also be responsible for determining the conformation of the 16S rRNA at the A site. In Francisella tularensis subsp. novicida (strain U112), this protein is Small ribosomal subunit protein uS14.